The following is a 390-amino-acid chain: Probable tRNA pseudouridine synthase D (390 aa).

The active-site Nucleophile is the D93. One can recognise a TRUD domain in the interval 166 to 353; that stretch reads YVLNYYGIQR…YGTRRKMITP (188 aa).

Belongs to the pseudouridine synthase TruD family.

The enzyme catalyses uridine(13) in tRNA = pseudouridine(13) in tRNA. Could be responsible for synthesis of pseudouridine from uracil-13 in transfer RNAs. The polypeptide is Probable tRNA pseudouridine synthase D (Methanococcus maripaludis (strain C5 / ATCC BAA-1333)).